The primary structure comprises 508 residues: Photosystem II CP47 reaction center protein (508 aa).

6 helical membrane passes run 21–36 (AVHIMHTALVSGWAGS), 101–115 (IVFSGLCFLAAIWHW), 140–156 (GIHLFLAGVACFGFGAF), 203–218 (IAAGTLGILAGLFHLS), 237–252 (VLSSSIAAVFFAAFVV), and 457–472 (TFALLFFFGHIWHGAR).

It belongs to the PsbB/PsbC family. PsbB subfamily. PSII is composed of 1 copy each of membrane proteins PsbA, PsbB, PsbC, PsbD, PsbE, PsbF, PsbH, PsbI, PsbJ, PsbK, PsbL, PsbM, PsbT, PsbX, PsbY, PsbZ, Psb30/Ycf12, at least 3 peripheral proteins of the oxygen-evolving complex and a large number of cofactors. It forms dimeric complexes. It depends on Binds multiple chlorophylls. PSII binds additional chlorophylls, carotenoids and specific lipids. as a cofactor.

It is found in the plastid. The protein localises to the chloroplast thylakoid membrane. Its function is as follows. One of the components of the core complex of photosystem II (PSII). It binds chlorophyll and helps catalyze the primary light-induced photochemical processes of PSII. PSII is a light-driven water:plastoquinone oxidoreductase, using light energy to abstract electrons from H(2)O, generating O(2) and a proton gradient subsequently used for ATP formation. The sequence is that of Photosystem II CP47 reaction center protein from Lolium perenne (Perennial ryegrass).